We begin with the raw amino-acid sequence, 380 residues long: Cytochrome b (380 aa).

The next 4 membrane-spanning stretches (helical) occupy residues 33 to 53, 77 to 98, 113 to 133, and 178 to 198; these read FGSL…FLAM, WLIR…YLHV, WNIG…GYVL, and FFAF…IHLL. Residues His-83 and His-97 each contribute to the heme b site. 2 residues coordinate heme b: His-182 and His-196. A ubiquinone is bound at residue His-201. 4 consecutive transmembrane segments (helical) span residues 226-246, 288-308, 320-340, and 347-367; these read YKDL…ALFS, LGGV…PMLH, LSQI…WIGG, and FVLI…IALP.

The protein belongs to the cytochrome b family. As to quaternary structure, the cytochrome bc1 complex contains 3 respiratory subunits (MT-CYB, CYC1 and UQCRFS1), 2 core proteins (UQCRC1 and UQCRC2) and probably 6 low-molecular weight proteins. It depends on heme b as a cofactor.

Its subcellular location is the mitochondrion inner membrane. Functionally, component of the ubiquinol-cytochrome c reductase complex (complex III or cytochrome b-c1 complex) that is part of the mitochondrial respiratory chain. The b-c1 complex mediates electron transfer from ubiquinol to cytochrome c. Contributes to the generation of a proton gradient across the mitochondrial membrane that is then used for ATP synthesis. This is Cytochrome b (mt-cyb) from Acipenser persicus (Persian sturgeon).